We begin with the raw amino-acid sequence, 332 residues long: uncharacterized protein (332 aa).

A helical membrane pass occupies residues 185-205 (MVYGYSVFNAFFILLALPNVI).

The protein localises to the host membrane. This is an uncharacterized protein from Sulfolobus islandicus filamentous virus (isolate Iceland/Hveragerdi) (SIFV).